Here is a 409-residue protein sequence, read N- to C-terminus: Nucleoprotein (409 aa).

Disordered stretches follow at residues 1 to 32 (MASGKATGKTDAPAPVIKLGGPKPPKVGSSGN), 45 to 69 (NSHPPKFEGSGVPDNENLKTSQQHG), 122 to 145 (DVKSRSHQGTRDPDKFDQYPLRFS), 164 to 194 (RSGRSTAASSAASSRAPSRDGSRGRRSGSED), and 238 to 259 (VDQVFGPRTKGKEGNFGDDKMN). Over residues 15–31 (PVIKLGGPKPPKVGSSG) the composition is skewed to low complexity. An RNA-binding region spans residues 29-160 (SSGNASWFQA…GNFRWDFIPL (132 aa)). Residues 31–156 (GNASWFQAIK…GGPDGNFRWD (126 aa)) enclose the CoV N NTD domain. The segment covering 122–138 (DVKSRSHQGTRDPDKFD) has biased composition (basic and acidic residues). Residues 164-179 (RSGRSTAASSAASSRA) show a composition bias toward low complexity. Composition is skewed to basic and acidic residues over residues 180-192 (PSRDGSRGRRSGS) and 247-259 (KGKEGNFGDDKMN). Phosphoserine; by host is present on residues Ser-190 and Ser-192. One can recognise a CoV N CTD domain in the interval 219–331 (ADEMAHRRYC…QCVDGVGTRP (113 aa)). The dimerization stretch occupies residues 226 to 333 (RYCKRTIPPG…VDGVGTRPKD (108 aa)). An intrachain disulfide couples Cys-320 to Cys-323. The tract at residues 326-409 (GVGTRPKDDE…GDSALGENEL (84 aa)) is disordered. Low complexity predominate over residues 341–357 (RSSSRPATRTSSPAPRQ). Basic residues predominate over residues 358-367 (QRPKKEKKPK). Thr-378 carries the post-translational modification Phosphothreonine; by host. Ser-379 is subject to Phosphoserine; by host.

The protein belongs to the gammacoronavirus nucleocapsid protein family. In terms of assembly, homooligomer. Both monomeric and oligomeric forms interact with RNA. Interacts with protein M. Interacts with NSP3; this interaction serves to tether the genome to the newly translated replicase-transcriptase complex at a very early stage of infection. ADP-ribosylated. The ADP-ribosylation is retained in the virion during infection. In terms of processing, phosphorylated on serine and threonine residues.

It is found in the virion. The protein resides in the host endoplasmic reticulum-Golgi intermediate compartment. Its subcellular location is the host Golgi apparatus. Its function is as follows. Packages the positive strand viral genome RNA into a helical ribonucleocapsid (RNP) and plays a fundamental role during virion assembly through its interactions with the viral genome and membrane protein M. Plays an important role in enhancing the efficiency of subgenomic viral RNA transcription as well as viral replication. The protein is Nucleoprotein of Avian infectious bronchitis virus (strain Arkansas 99) (IBV).